The following is a 113-amino-acid chain: U11-theraphotoxin-Hhn1a (113 aa).

A signal peptide spans 1–21 (MNTVRVTFLLVFVLAVSLGRA). A propeptide spanning residues 22–74 (DKDENRMEMQEKTEQGKSYLDFAENLLLQKLEELEAKLLEEDSEESRNSRQKR) is cleaved from the precursor. Cystine bridges form between C75-C90, C82-C95, and C89-C110.

It belongs to the neurotoxin 14 (magi-1) family. 01 (HNTX-16) subfamily. As to expression, expressed by the venom gland.

The protein resides in the secreted. Functionally, probable ion channel inhibitor. The sequence is that of U11-theraphotoxin-Hhn1a from Cyriopagopus hainanus (Chinese bird spider).